A 488-amino-acid polypeptide reads, in one-letter code: RNA binding exosome specificity factor Mmi1 (488 aa).

Polar residues-rich tracts occupy residues 1–14, 33–47, and 54–66; these read MSNTNFSTSRSSKS, LNESGDTRSVWTTHT, and SVLSTSGSNNFSS. Disordered stretches follow at residues 1-20 and 25-80; these read MSNTNFSTSRSSKSIPELPN and RSLW…DAPI. A compositionally biased stretch (basic and acidic residues) spans 71-80; the sequence is PAPESHDAPI. The interaction with erh1 stretch occupies residues 95–122; it reads GKYDFSRHCTDYGHSYEWPYFRSLRRES. Disordered stretches follow at residues 163–185 and 225–261; these read SRLHGIQPPPKRRTLSPPPRRLA and SYPVRSSPQLSHEDTRHGIASSGSTRYPFVPANTRAS. Thr-176 is modified (phosphothreonine). A phosphoserine mark is found at Ser-178, Ser-230, Ser-231, Ser-261, Ser-263, and Ser-265. Over residues 289 to 299 the composition is skewed to low complexity; sequence SYLLSNSSNDS. The disordered stretch occupies residues 289 to 328; it reads SYLLSNSSNDSASRKEKPKARASTPPPLNFSRASEHRNEK. At Ser-311 the chain carries Phosphoserine. The residue at position 312 (Thr-312) is a Phosphothreonine. In terms of domain architecture, YTH spans 350-476; it reads SRYFIMLCDN…DEGSRLCTLI (127 aa).

Component of the erh1-mmi1 complex composed of mmi1 and erh1. Interacts (via N-terminus) with erh1 in a 2:2 stoichiometry. Interacts with rrp6.

It is found in the nucleus. RNA-binding protein that recognizes and binds N6-methyladenosine (m6A)-containing RNAs, a modification present at internal sites of mRNAs and some non-coding RNAs. Functions alone and as part of the erh1-mmi1 complex, to recruit the CCR4-NOT complex and the NURS complex to target RNAs. Suppresses the meiotic program during vegetative growth and promotes the meiotic program during mating. Binds to DSR (determinant of selective removal) regions in meiotic mRNA, and recruits the NURS complex to targets. Recruitment of NURS complex to target mRNAs promotes mRNA decay by engagement of the nuclear exosome, and formation of heterochromatin islands at meiotic genes silenced by the exosome. Recruitment of the CCR4-NOT complex to target RNAs promotes heterochromatin formation at RNAi-dependent heterochromatin domains (HOODs), including a subset of meiotic genes, lncRNAs and retrotransposons. Recruitment of the CCR4-NOT complex to rDNA promotes rDNA heterochromatin assembly. Promotes non-canonical transcription termination at meiotic genes and prevents lncRNA transcription from invading and repressing adjacent genes. This is RNA binding exosome specificity factor Mmi1 (mmi1) from Schizosaccharomyces pombe (strain 972 / ATCC 24843) (Fission yeast).